Reading from the N-terminus, the 194-residue chain is Phosphoheptose isomerase (194 aa).

Residues 37-194 (ISNSFKQGGK…LIEFEMAKQA (158 aa)) enclose the SIS domain. A substrate-binding site is contributed by 52–54 (NGG). His-61 and Glu-65 together coordinate Zn(2+). Residues Glu-65, 93–94 (ND), 119–121 (STS), Ser-124, and Gln-172 contribute to the substrate site. Residues Gln-172 and His-180 each coordinate Zn(2+).

Belongs to the SIS family. GmhA subfamily. In terms of assembly, homotetramer. Zn(2+) is required as a cofactor.

The protein localises to the cytoplasm. It catalyses the reaction 2 D-sedoheptulose 7-phosphate = D-glycero-alpha-D-manno-heptose 7-phosphate + D-glycero-beta-D-manno-heptose 7-phosphate. It functions in the pathway carbohydrate biosynthesis; D-glycero-D-manno-heptose 7-phosphate biosynthesis; D-glycero-alpha-D-manno-heptose 7-phosphate and D-glycero-beta-D-manno-heptose 7-phosphate from sedoheptulose 7-phosphate: step 1/1. Its function is as follows. Catalyzes the isomerization of sedoheptulose 7-phosphate in D-glycero-D-manno-heptose 7-phosphate. The sequence is that of Phosphoheptose isomerase from Haemophilus influenzae (strain PittGG).